The following is a 194-amino-acid chain: Peptidyl-tRNA hydrolase (194 aa).

Residue Tyr-17 participates in tRNA binding. His-22 functions as the Proton acceptor in the catalytic mechanism. Residues Phe-68, Asn-70, and Asn-116 each coordinate tRNA.

The protein belongs to the PTH family. Monomer.

It is found in the cytoplasm. The catalysed reaction is an N-acyl-L-alpha-aminoacyl-tRNA + H2O = an N-acyl-L-amino acid + a tRNA + H(+). Hydrolyzes ribosome-free peptidyl-tRNAs (with 1 or more amino acids incorporated), which drop off the ribosome during protein synthesis, or as a result of ribosome stalling. In terms of biological role, catalyzes the release of premature peptidyl moieties from peptidyl-tRNA molecules trapped in stalled 50S ribosomal subunits, and thus maintains levels of free tRNAs and 50S ribosomes. The protein is Peptidyl-tRNA hydrolase of Shewanella halifaxensis (strain HAW-EB4).